The primary structure comprises 92 residues: MEIKSDHSEHGFQFPGTFELSAVGTAGKALETELPRLLARCGVELVQERISWKHSSTGKYVSVRISFRALDREQYDAAHQVLRDHPEVKWTL.

The protein belongs to the UPF0250 family.

This chain is UPF0250 protein XF_1271, found in Xylella fastidiosa (strain 9a5c).